The chain runs to 348 residues: MTHSRFLAACRRQPVDATPVWFMRQAGRYMPEYRAIRERYGFLEMVKTPELAAEITMQPIRAFSVDAAIIFADILPLLEGMGLHLTYEQGEGPVIHNPVRSPADVAALRTPDPRETVAYTIQAIRLVKRDLEGRAPLIGFSGAPFTLAAYAIEGGSSRDHRLTKALMYAEPQAWRELMERLTAQVSAYLIAQIEAGADAVQIFDSWAGALAPGDYADYVLPFVQKCIIAVRAGCGIVPPPPIIYFGVGLSGMLGLLRQTDADVIGLDWRIHLDDGWAQVGPGVAVQGNLDPHTLLAPWTEVRRRTADILDRAAGRPGHIFNLGHGIVPETPVDTVRRLAEFVHEYSAE.

Substrate contacts are provided by residues 24 to 28 (RQAGR), aspartate 73, tyrosine 150, serine 205, and histidine 324.

Belongs to the uroporphyrinogen decarboxylase family. In terms of assembly, homodimer.

It is found in the cytoplasm. It carries out the reaction uroporphyrinogen III + 4 H(+) = coproporphyrinogen III + 4 CO2. Its pathway is porphyrin-containing compound metabolism; protoporphyrin-IX biosynthesis; coproporphyrinogen-III from 5-aminolevulinate: step 4/4. Its function is as follows. Catalyzes the decarboxylation of four acetate groups of uroporphyrinogen-III to yield coproporphyrinogen-III. The sequence is that of Uroporphyrinogen decarboxylase from Roseiflexus sp. (strain RS-1).